We begin with the raw amino-acid sequence, 410 residues long: Transcription factor PHYTOCHROME INTERACTING FACTOR-LIKE 13 (410 aa).

Residues 82–92 (AAAAAGPSSHH) are compositionally biased toward low complexity. Disordered regions lie at residues 82–110 (AAAA…MRSG) and 137–225 (CRDA…AEVH). Residues 93-104 (APPPDLPPPAAR) are compositionally biased toward pro residues. Residues 187-197 (GREDSDSRSED) are compositionally biased toward basic and acidic residues. Basic residues predominate over residues 209-219 (SSRRYGSKRRT). A basic motif region spans residues 220-233 (RAAEVHNLSERRRR). In terms of domain architecture, bHLH spans 220–269 (RAAEVHNLSERRRRDRINEKMRALQELIPHCNKTDKASILDEAIEYLKSL). Residues 234–269 (DRINEKMRALQELIPHCNKTDKASILDEAIEYLKSL) are helix-loop-helix motif. The disordered stretch occupies residues 357-410 (PFLHPDGWQTVPPQVSGPYASGPQVAQQNQIPKASASTVLPNSGAEQPPTSDGI). Over residues 380-410 (QVAQQNQIPKASASTVLPNSGAEQPPTSDGI) the composition is skewed to polar residues.

Belongs to the bHLH protein family. As to quaternary structure, interacts with PRR1. Interacts with LF. In terms of tissue distribution, highly expressed in the node portions of the stem. Expressed in the leaves and the basal part of shoots.

It is found in the nucleus. Transcription factor that may act as negative regulator of phyB-dependent light signal transduction. Transcription activator that acts as a positive regulator of internode elongation. May function via regulation of cell wall-related genes. May play a role in a drought-associated growth-restriction mechanism in response to drought stress. This is Transcription factor PHYTOCHROME INTERACTING FACTOR-LIKE 13 from Oryza sativa subsp. japonica (Rice).